Consider the following 294-residue polypeptide: Aquaporin NIP2-2 (294 aa).

The next 2 helical transmembrane spans lie at 54–74 (VISE…AASI) and 88–108 (SVAG…ISGA). The NPA 1 motif lies at 111–113 (NPA). The next 3 helical transmembrane spans lie at 129-151 (VPFY…KAVL), 169-189 (ALLI…AVAT), and 197-217 (LAGL…GPVS). The NPA 2 signature appears at 222-224 (NPA). A helical membrane pass occupies residues 235–255 (VFTGLWIYFLGPVIGTLSGAW).

Belongs to the MIP/aquaporin (TC 1.A.8) family. NIP (TC 1.A.8.12) subfamily.

It is found in the membrane. In terms of biological role, aquaporins facilitate the transport of water and small neutral solutes across cell membranes. This is Aquaporin NIP2-2 (NIP2-2) from Zea mays (Maize).